Reading from the N-terminus, the 251-residue chain is Cell division protein ZapD (251 aa).

The protein belongs to the ZapD family. Interacts with FtsZ.

Its subcellular location is the cytoplasm. Its function is as follows. Cell division factor that enhances FtsZ-ring assembly. Directly interacts with FtsZ and promotes bundling of FtsZ protofilaments, with a reduction in FtsZ GTPase activity. In Burkholderia multivorans (strain ATCC 17616 / 249), this protein is Cell division protein ZapD.